Here is a 710-residue protein sequence, read N- to C-terminus: Amyloid beta precursor protein binding family B member 1 (710 aa).

Over residues 1–15 the composition is skewed to polar residues; sequence MSVPSSLSQSAINAN. 4 disordered regions span residues 1-24, 131-254, 276-299, and 340-365; these read MSVP…ALSL, GLRG…TDSD, GTTQ…EESQ, and TFPA…NTNP. Residues 145–173 show a composition bias toward acidic residues; the sequence is GPDEGEEKAAGEAEEEEEDDDDEEEEEDL. Position 204 is an N6-acetyllysine (Lys-204). Residues 223 to 234 are compositionally biased toward polar residues; sequence SWATLSQGSPSY. The WW domain occupies 253-285; the sequence is SDLPAGWMRVQDTSGTYYWHIPTGTTQWEPPGR. Over residues 287–299 the composition is skewed to low complexity; the sequence is SPSQGSSPQEESQ. Residues 370–509 form the PID 1 domain; the sequence is FAVRSLGWVE…SKIMAERRNA (140 aa). Ser-459 carries the post-translational modification Phosphoserine; by PKC. Phosphoserine is present on Ser-517. The region spanning 542–699 is the PID 2 domain; that stretch reads KFQVYYLGNV…RRGVQSLWGS (158 aa). Tyr-547 is subject to Phosphotyrosine; by ABL1. A Phosphoserine; by SGK1 modification is found at Ser-610. At Lys-701 the chain carries N6-acetyllysine.

As to quaternary structure, component of a complex, at least composed of APBB1, RASD1/DEXRAS1 and APP. Interacts (via PID domain 2) with APP (with the intracellular domain of the amyloid-beta precursor protein). Interacts (via PID domain 2) with RASD1/DEXRAS1; impairs the transcription activation activity. Interacts (via PID domain 1) with KAT5/TIP60. Interacts (via the WW domain) with the proline-rich region of APBB1IP. Interacts with TSHZ1 and TSHZ2. Interacts (via the WW domain) with histone H2AX (when phosphorylated on 'Tyr-142') and the proline-rich region of ENAH. Interacts with MAPK8. Interacts (via PID domain 1) with TSHZ3 (via homeobox domain). Interacts with SET. Found in a trimeric complex with HDAC1 and TSHZ3; the interaction between HDAC1 and APBB1 is mediated by TSHZ3. Interacts (via WWW domain) with NEK6. Interacts (via WWW domain) with ABL1. Interacts with RNF157. Interacts with ARF6. Post-translationally, phosphorylation at Ser-610 by SGK1 promotes its localization to the nucleus. Phosphorylated following nuclear translocation. Phosphorylation at Tyr-547 by ABL1 enhances transcriptional activation activity and reduces the affinity for RASD1/DEXRAS1. Phosphorylated at Ser-459 by PKC upon insulin activation. Acetylation at Lys-204 and Lys-701 by KAT5 promotes its transcription activator activity. In terms of processing, polyubiquitination by RNF157 leads to degradation by the proteasome. As to expression, highly expressed in brain; strongly reduced in post-mortem elderly subjects with Alzheimer disease. Expressed preferentially in the brain.

It localises to the cell membrane. It is found in the cytoplasm. The protein resides in the nucleus. The protein localises to the cell projection. Its subcellular location is the growth cone. It localises to the nucleus speckle. In terms of biological role, transcription coregulator that can have both coactivator and corepressor functions. Adapter protein that forms a transcriptionally active complex with the gamma-secretase-derived amyloid precursor protein (APP) intracellular domain. Plays a central role in the response to DNA damage by translocating to the nucleus and inducing apoptosis. May act by specifically recognizing and binding histone H2AX phosphorylated on 'Tyr-142' (H2AXY142ph) at double-strand breaks (DSBs), recruiting other pro-apoptosis factors such as MAPK8/JNK1. Required for histone H4 acetylation at double-strand breaks (DSBs). Its ability to specifically bind modified histones and chromatin modifying enzymes such as KAT5/TIP60, probably explains its transcription activation activity. Functions in association with TSHZ3, SET and HDAC factors as a transcriptional repressor, that inhibits the expression of CASP4. Associates with chromatin in a region surrounding the CASP4 transcriptional start site(s). Involved in hippocampal neurite branching and neuromuscular junction formation, as a result plays a role in spatial memory functioning. Plays a role in the maintenance of lens transparency. May play a role in muscle cell strength. Acts as a molecular adapter that functions in neurite outgrowth by activating the RAC1-ARF6 axis upon insulin treatment. This chain is Amyloid beta precursor protein binding family B member 1, found in Homo sapiens (Human).